A 177-amino-acid chain; its full sequence is MATIVRQNGLTPIQETNEVKSFLKERGIDYDHWKVPHNASNLTDKEVLVDTEKEELLKKLDDRFETLKAKEGYQSRDLIVLHPNVSGLNEMLAKFDKVHYHTDEEVRYIVDGSGVFGFAFKDEKFLVHVYKDDFISVPRNTNHWFYLDDKKRIKAVRYFQDMSGWVPNYVEETNSLD.

Fe(2+) contacts are provided by His99, His101, Glu105, and His143. Ni(2+)-binding residues include His99, His101, Glu105, and His143.

The protein belongs to the acireductone dioxygenase (ARD) family. As to quaternary structure, monomer. It depends on Fe(2+) as a cofactor. Requires Ni(2+) as cofactor.

It carries out the reaction 1,2-dihydroxy-5-(methylsulfanyl)pent-1-en-3-one + O2 = 3-(methylsulfanyl)propanoate + CO + formate + 2 H(+). The enzyme catalyses 1,2-dihydroxy-5-(methylsulfanyl)pent-1-en-3-one + O2 = 4-methylsulfanyl-2-oxobutanoate + formate + 2 H(+). It participates in amino-acid biosynthesis; L-methionine biosynthesis via salvage pathway; L-methionine from S-methyl-5-thio-alpha-D-ribose 1-phosphate: step 5/6. In terms of biological role, catalyzes 2 different reactions between oxygen and the acireductone 1,2-dihydroxy-3-keto-5-methylthiopentene (DHK-MTPene) depending upon the metal bound in the active site. Fe-containing acireductone dioxygenase (Fe-ARD) produces formate and 2-keto-4-methylthiobutyrate (KMTB), the alpha-ketoacid precursor of methionine in the methionine recycle pathway. Ni-containing acireductone dioxygenase (Ni-ARD) produces methylthiopropionate, carbon monoxide and formate, and does not lie on the methionine recycle pathway. This chain is Acireductone dioxygenase, found in Leptospira interrogans serogroup Icterohaemorrhagiae serovar copenhageni (strain Fiocruz L1-130).